Here is a 565-residue protein sequence, read N- to C-terminus: Nephronectin (565 aa).

Residues Met-1–Ala-19 form the signal peptide. The 36-residue stretch at Ser-52–Asn-87 folds into the EGF-like 1 domain. 6 disulfide bridges follow: Cys-56–Cys-69, Cys-60–Cys-75, Cys-77–Cys-86, Cys-93–Cys-104, Cys-100–Cys-113, and Cys-115–Cys-127. The EGF-like 2; calcium-binding domain occupies Asp-89 to Ser-128. The 37-residue stretch at Thr-132 to Val-168 folds into the EGF-like 3 domain. The 45-residue stretch at Asp-169–His-213 folds into the EGF-like 4; calcium-binding domain. 6 disulfide bridges follow: Cys-173–Cys-186, Cys-180–Cys-195, Cys-197–Cys-212, Cys-218–Cys-231, Cys-225–Cys-240, and Cys-242–Cys-253. The region spanning Asp-214–Val-254 is the EGF-like 5; calcium-binding domain. The interval Tyr-301–Arg-389 is disordered. Positions Pro-304–Thr-316 are enriched in low complexity. A compositionally biased stretch (pro residues) spans Arg-317 to Pro-347. The Integrin interaction signature appears at Arg-382–Asp-384. Positions His-420–Glu-563 constitute an MAM domain.

It belongs to the nephronectin family. In terms of assembly, homodimer and homotrimer. In terms of tissue distribution, expressed in kidney and lung and to a lower extent in brain, pregnant uterus, placenta, thyroid gland and blood vessels.

Its subcellular location is the secreted. The protein resides in the extracellular space. It is found in the extracellular matrix. Its function is as follows. Functional ligand of integrin alpha-8/beta-1 in kidney development. Regulates the expression of GDNF with integrin alpha-8/beta-1 which is essential for kidney development. May also play a role in the development and function of various tissues, regulating cell adhesion, spreading and survival through the binding of several integrins. The polypeptide is Nephronectin (NPNT) (Homo sapiens (Human)).